The following is a 527-amino-acid chain: Serine/threonine-protein kinase CHK1 (527 aa).

The region spanning 15–281 (VVLGDTVGQG…LKALKLHPWV (267 aa)) is the Protein kinase domain. ATP contacts are provided by residues 21–29 (VGQGAFACV) and Lys45. Catalysis depends on Asp142, which acts as the Proton acceptor.

It belongs to the protein kinase superfamily. CAMK Ser/Thr protein kinase family. NIM1 subfamily.

Its subcellular location is the nucleus. The catalysed reaction is L-seryl-[protein] + ATP = O-phospho-L-seryl-[protein] + ADP + H(+). It catalyses the reaction L-threonyl-[protein] + ATP = O-phospho-L-threonyl-[protein] + ADP + H(+). Its function is as follows. Serine/threonine-protein kinase which is required for checkpoint-mediated cell cycle arrest and activation of DNA repair in response to the presence of DNA damage or unreplicated DNA. May also negatively regulate cell cycle progression during unperturbed cell cycles. Controls phosphorylation and abundance of PDS1 to prevent anaphase entry. Also helps prevent mitotic exit. This chain is Serine/threonine-protein kinase CHK1 (CHK1), found in Saccharomyces cerevisiae (strain ATCC 204508 / S288c) (Baker's yeast).